A 227-amino-acid chain; its full sequence is Cytochrome c oxidase subunit 2 (227 aa).

Topologically, residues 1–14 are mitochondrial intermembrane; the sequence is MAYPFQLGLQDATS. The chain crosses the membrane as a helical span at residues 15–45; the sequence is PIMEELTNFHDHTLMIVFLISSLVLYIISLM. Topologically, residues 46–59 are mitochondrial matrix; sequence LTTKLTHTSTMDAQ. A helical transmembrane segment spans residues 60 to 87; it reads EVETIWTILPAVILILIALPSLRILYMM. Residues 88–227 lie on the Mitochondrial intermembrane side of the membrane; sequence DEINNPALTV…HFENWSASMI (140 aa). 6 residues coordinate Cu cation: His-161, Cys-196, Glu-198, Cys-200, His-204, and Met-207. Glu-198 serves as a coordination point for Mg(2+).

The protein belongs to the cytochrome c oxidase subunit 2 family. In terms of assembly, component of the cytochrome c oxidase (complex IV, CIV), a multisubunit enzyme composed of 14 subunits. The complex is composed of a catalytic core of 3 subunits MT-CO1, MT-CO2 and MT-CO3, encoded in the mitochondrial DNA, and 11 supernumerary subunits COX4I, COX5A, COX5B, COX6A, COX6B, COX6C, COX7A, COX7B, COX7C, COX8 and NDUFA4, which are encoded in the nuclear genome. The complex exists as a monomer or a dimer and forms supercomplexes (SCs) in the inner mitochondrial membrane with NADH-ubiquinone oxidoreductase (complex I, CI) and ubiquinol-cytochrome c oxidoreductase (cytochrome b-c1 complex, complex III, CIII), resulting in different assemblies (supercomplex SCI(1)III(2)IV(1) and megacomplex MCI(2)III(2)IV(2)). Found in a complex with TMEM177, COA6, COX18, COX20, SCO1 and SCO2. Interacts with TMEM177 in a COX20-dependent manner. Interacts with COX20. Interacts with COX16. It depends on Cu cation as a cofactor.

It localises to the mitochondrion inner membrane. It carries out the reaction 4 Fe(II)-[cytochrome c] + O2 + 8 H(+)(in) = 4 Fe(III)-[cytochrome c] + 2 H2O + 4 H(+)(out). Its function is as follows. Component of the cytochrome c oxidase, the last enzyme in the mitochondrial electron transport chain which drives oxidative phosphorylation. The respiratory chain contains 3 multisubunit complexes succinate dehydrogenase (complex II, CII), ubiquinol-cytochrome c oxidoreductase (cytochrome b-c1 complex, complex III, CIII) and cytochrome c oxidase (complex IV, CIV), that cooperate to transfer electrons derived from NADH and succinate to molecular oxygen, creating an electrochemical gradient over the inner membrane that drives transmembrane transport and the ATP synthase. Cytochrome c oxidase is the component of the respiratory chain that catalyzes the reduction of oxygen to water. Electrons originating from reduced cytochrome c in the intermembrane space (IMS) are transferred via the dinuclear copper A center (CU(A)) of subunit 2 and heme A of subunit 1 to the active site in subunit 1, a binuclear center (BNC) formed by heme A3 and copper B (CU(B)). The BNC reduces molecular oxygen to 2 water molecules using 4 electrons from cytochrome c in the IMS and 4 protons from the mitochondrial matrix. The sequence is that of Cytochrome c oxidase subunit 2 (MT-CO2) from Berylmys bowersi (Bower's white-toothed rat).